We begin with the raw amino-acid sequence, 397 residues long: Elongation factor Tu (397 aa).

Positions 10–207 constitute a tr-type G domain; it reads LPHVNVGTIG…TLDSYIPEPE (198 aa). The G1 stretch occupies residues 19–26; that stretch reads GHVDHGKT. 19 to 26 contributes to the GTP binding site; it reads GHVDHGKT. Thr26 lines the Mg(2+) pocket. The tract at residues 60–64 is G2; the sequence is GITIN. A G3 region spans residues 81–84; the sequence is DCPG. Residues 81–85 and 136–139 each bind GTP; these read DCPGH and NKAD. The segment at 136–139 is G4; sequence NKAD. The tract at residues 174 to 176 is G5; that stretch reads SAR.

Belongs to the TRAFAC class translation factor GTPase superfamily. Classic translation factor GTPase family. EF-Tu/EF-1A subfamily. In terms of assembly, monomer.

The protein resides in the cytoplasm. The enzyme catalyses GTP + H2O = GDP + phosphate + H(+). Its function is as follows. GTP hydrolase that promotes the GTP-dependent binding of aminoacyl-tRNA to the A-site of ribosomes during protein biosynthesis. The protein is Elongation factor Tu of Pseudomonas fluorescens (strain Pf0-1).